The following is a 544-amino-acid chain: Probable protein kinase UbiB (544 aa).

A Protein kinase domain is found at 123 to 501 (DFDIKPLASA…KRQQAKGQFL (379 aa)). ATP contacts are provided by residues 129–137 (LASASIAQV) and K152. The active-site Proton acceptor is D287. A helical transmembrane segment spans residues 515-537 (LLTSNITVLASISAATGAAFWLF).

Belongs to the ABC1 family. UbiB subfamily.

The protein resides in the cell inner membrane. It participates in cofactor biosynthesis; ubiquinone biosynthesis [regulation]. In terms of biological role, is probably a protein kinase regulator of UbiI activity which is involved in aerobic coenzyme Q (ubiquinone) biosynthesis. This Aliivibrio fischeri (strain ATCC 700601 / ES114) (Vibrio fischeri) protein is Probable protein kinase UbiB.